A 278-amino-acid chain; its full sequence is Complement component 1 Q subcomponent-binding protein, mitochondrial (278 aa).

Residues 1-70 constitute a mitochondrion transit peptide; sequence MLPLLRCVPR…PVPCACGCGA (70 aa). The C1q binding stretch occupies residues 73–90; it reads TEGDKAFVEFLTDEIKEE. K88 and K91 each carry N6-acetyllysine. Residues 133–162 form a disordered region; it reads NNSIPPTFDGEEEPSQGQKAEEQEPERTST. The interval 165–209 is interaction with MAVS; the sequence is FVVEVTKTDGKKTLVLDCHYPEDEIGHEDEAESDIFSIKEVSFQA. The residue at position 184 (Y184) is a Phosphotyrosine. Phosphoserine occurs at positions 197 and 201. T210 bears the Phosphothreonine mark.

It belongs to the MAM33 family. As to quaternary structure, homotrimer; three monomers form a donut-shaped structure with an unusually asymmetric charge distribution on the surface. Interacts with CDK13, HRK, VTN, NFYB, ADRA1B, FOXC1, DDX21, DDX50, NCL, SRSF1 and SRSF9. Interacts with CD93; the association may represent a cell surface C1q receptor. Interacts with KRT1; the association represents a cell surface kininogen receptor. Interacts with CD209; the interaction is indicative for a C1q:C1QBP:CD209 signaling complex. Interacts with FBL and RRP1; the respective interactions with C1QBP are competitive. Probably associates with the mitoribosome. Interacts with MAVS; the interaction occurs upon viral transfection. Interacts with PPIF. Interacts with U2AF1L4. Interacts with PLEKHN1. Interacts with VGF-derived peptide TLQP-21. Interacts with MRE11 and RAD50; forming the MRC (MRE11-RAD50-C1QBP) complex that inhibits the activity of MRE11. In terms of tissue distribution, ubiquitous.

It is found in the mitochondrion matrix. It localises to the nucleus. The protein resides in the cell membrane. Its subcellular location is the secreted. The protein localises to the cytoplasm. It is found in the nucleolus. In terms of biological role, is believed to be a multifunctional and multicompartmental protein involved in inflammation and infection processes, ribosome biogenesis, protein synthesis in mitochondria, regulation of apoptosis, transcriptional regulation and pre-mRNA splicing. At the cell surface is thought to act as an endothelial receptor for plasma proteins of the complement and kallikrein-kinin cascades. Putative receptor for C1q; specifically binds to the globular 'heads' of C1q thus inhibiting C1; may perform the receptor function through a complex with C1qR/CD93. In complex with cytokeratin-1/KRT1 is a high affinity receptor for kininogen-1/HMWK. Can also bind other plasma proteins, such as coagulation factor XII leading to its autoactivation. May function to bind initially fluid kininogen-1 to the cell membrane. The secreted form may enhance both extrinsic and intrinsic coagulation pathways. It is postulated that the cell surface form requires docking with transmembrane proteins for downstream signaling which might be specific for a cell-type or response. By acting as C1q receptor is involved in chemotaxis of immature dendritic cells and neutrophils and is proposed to signal through CD209/DC-SIGN on immature dendritic cells, through integrin alpha-4/beta-1 during trophoblast invasion of the decidua, and through integrin beta-1 during endothelial cell adhesion and spreading. Signaling involved in inhibition of innate immune response is implicating the PI3K-AKT/PKB pathway. Required for protein synthesis in mitochondria. In mitochondrial translation may be involved in formation of functional 55S mitoribosomes; the function seems to involve its RNA-binding activity. Acts as a RNA modification reader, which specifically recognizes and binds mitochondrial RNAs modified by C5-methylcytosine (m5C) in response to stress, and promotes recruitment of the mitochondrial degradosome complex, leading to their degradation. May be involved in the nucleolar ribosome maturation process; the function may involve the exchange of FBL for RRP1 in the association with pre-ribosome particles. Involved in regulation of RNA splicing by inhibiting the RNA-binding capacity of SRSF1 and its phosphorylation. Is required for the nuclear translocation of splicing factor U2AF1L4. Involved in regulation of CDKN2A- and HRK-mediated apoptosis. May be involved in regulation of FOXC1 transcriptional activity and NFY/CCAAT-binding factor complex-mediated transcription. May play a role in antibacterial defense. Acts as a regulator of DNA repair via homologous recombination by inhibiting the activity of MRE11: interacts with unphosphorylated MRE11 and RAD50 in absence of DNA damage, preventing formation and activity of the MRN complex. Following DNA damage, dissociates from phosphorylated MRE11, allowing formation of the MRN complex. This chain is Complement component 1 Q subcomponent-binding protein, mitochondrial (C1qbp), found in Mus musculus (Mouse).